The chain runs to 199 residues: Holliday junction branch migration complex subunit RuvA (199 aa).

Positions 1–63 (MIASVRGEVL…EDSMTLYGFT (63 aa)) are domain I. The interval 64–142 (DAETRDLFLT…AAGAAGAPAG (79 aa)) is domain II. Positions 143-153 (AARNGHAVRGP) are flexible linker. The interval 153–199 (PVVEALVGLGFAAKQAEEATDKVLAAEPEAGTSGALRAALSLLGKSR) is domain III.

It belongs to the RuvA family. As to quaternary structure, homotetramer. Forms an RuvA(8)-RuvB(12)-Holliday junction (HJ) complex. HJ DNA is sandwiched between 2 RuvA tetramers; dsDNA enters through RuvA and exits via RuvB. An RuvB hexamer assembles on each DNA strand where it exits the tetramer. Each RuvB hexamer is contacted by two RuvA subunits (via domain III) on 2 adjacent RuvB subunits; this complex drives branch migration. In the full resolvosome a probable DNA-RuvA(4)-RuvB(12)-RuvC(2) complex forms which resolves the HJ.

Its subcellular location is the cytoplasm. In terms of biological role, the RuvA-RuvB-RuvC complex processes Holliday junction (HJ) DNA during genetic recombination and DNA repair, while the RuvA-RuvB complex plays an important role in the rescue of blocked DNA replication forks via replication fork reversal (RFR). RuvA specifically binds to HJ cruciform DNA, conferring on it an open structure. The RuvB hexamer acts as an ATP-dependent pump, pulling dsDNA into and through the RuvAB complex. HJ branch migration allows RuvC to scan DNA until it finds its consensus sequence, where it cleaves and resolves the cruciform DNA. This is Holliday junction branch migration complex subunit RuvA from Mycobacterium avium (strain 104).